We begin with the raw amino-acid sequence, 145 residues long: D-aminoacyl-tRNA deacylase (145 aa).

The Gly-cisPro motif, important for rejection of L-amino acids signature appears at 137 to 138 (GP).

The protein belongs to the DTD family. In terms of assembly, homodimer.

It is found in the cytoplasm. It carries out the reaction glycyl-tRNA(Ala) + H2O = tRNA(Ala) + glycine + H(+). The catalysed reaction is a D-aminoacyl-tRNA + H2O = a tRNA + a D-alpha-amino acid + H(+). Functionally, an aminoacyl-tRNA editing enzyme that deacylates mischarged D-aminoacyl-tRNAs. Also deacylates mischarged glycyl-tRNA(Ala), protecting cells against glycine mischarging by AlaRS. Acts via tRNA-based rather than protein-based catalysis; rejects L-amino acids rather than detecting D-amino acids in the active site. By recycling D-aminoacyl-tRNA to D-amino acids and free tRNA molecules, this enzyme counteracts the toxicity associated with the formation of D-aminoacyl-tRNA entities in vivo and helps enforce protein L-homochirality. The sequence is that of D-aminoacyl-tRNA deacylase from Klebsiella pneumoniae subsp. pneumoniae (strain ATCC 700721 / MGH 78578).